We begin with the raw amino-acid sequence, 768 residues long: MGKKDRQRKKLREFAKLKNRQRNLRKSVQTLKNEVQREAKVPRTSNQIALGNDKIEEINENSPLLSAPSKQEEVSIPKAVDIDTIDAQPLHEGPKIDDSPQDEVNSIKGKPADKANEDDLKPPSQHEACGNSALQSSITDFSDRSVSPLQSITSCNTPMSEHELPVSSSNSFERADDMPVVQADNQTSSSKSLHIVAPSPEVPVSGDEITSYGYGSIPQSIGDVENGLNPPYVENTSSDELVHDLTRRRIFSSCMCTYLFFIAMDSSIILVIASKIASEFHELWRLSLVISAYLLSNAIGQLVFLKLSLISSVKLLLCIAQFSFILGGYLSWSSAHFWTFIFARCVTGFGGGSLIALKSTIMNRFSQKNDSRYSLSASMITFAMGVVIGPFMMNLFDSSHGSGWRNAFLIPVPFCLVNASIMLADMYSVKSTLYGRPTPTLWKRFKNTLLSPDLYEILTLTLFLLCFVQVTSLDLTGLKNNTMIQALLFSVIIVCGILFFLIETSDTYMNSVISMSLQGDKRLIWTMIGISFCFAALMCIIPFGTTYFIIVLNLSTLQLAERLSPFFFSIVLGYFSVSYFWKSKGQNFLLKFVLSGATLLLYVALMGVSLNLPVWKQYICLSLPFLGSSMILTLLSNLYHEYHEQRKSPISGSIVYCFGAVGGTVGISLGGYVFHKTLIKLMHEKVMPFSKQGYLKKDLLKIIKHATESSDWVHESAPKFVFQTLIECYLQACRNVFKLSTLFFTITVVAIFIFNRIHCRSQNCLSLS.

Residues 1-252 lie on the Cytoplasmic side of the membrane; that stretch reads MGKKDRQRKK…HDLTRRRIFS (252 aa). Residues 9-40 adopt a coiled-coil conformation; that stretch reads KKLREFAKLKNRQRNLRKSVQTLKNEVQREAK. Residues 34 to 172 are disordered; it reads EVQREAKVPR…ELPVSSSNSF (139 aa). Ser62, Ser99, and Ser106 each carry phosphoserine. A compositionally biased stretch (basic and acidic residues) spans 110-121; sequence KPADKANEDDLK. Over residues 132–159 the composition is skewed to polar residues; sequence SALQSSITDFSDRSVSPLQSITSCNTPM. Residues Ser160 and Ser192 each carry the phosphoserine modification. A helical membrane pass occupies residues 253-273; it reads SCMCTYLFFIAMDSSIILVIA. The Vacuolar segment spans residues 274-282; sequence SKIASEFHE. Residues 283–305 traverse the membrane as a helical segment; sequence LWRLSLVISAYLLSNAIGQLVFL. The Cytoplasmic portion of the chain corresponds to 306–311; it reads KLSLIS. A helical transmembrane segment spans residues 312–331; it reads SVKLLLCIAQFSFILGGYLS. Residues 332-334 are Vacuolar-facing; the sequence is WSS. Residues 335–357 traverse the membrane as a helical segment; sequence AHFWTFIFARCVTGFGGGSLIAL. The Cytoplasmic segment spans residues 358–375; sequence KSTIMNRFSQKNDSRYSL. A helical transmembrane segment spans residues 376–396; that stretch reads SASMITFAMGVVIGPFMMNLF. Topologically, residues 397-406 are vacuolar; that stretch reads DSSHGSGWRN. A helical transmembrane segment spans residues 407–427; that stretch reads AFLIPVPFCLVNASIMLADMY. Over 428–447 the chain is Cytoplasmic; it reads SVKSTLYGRPTPTLWKRFKN. A helical transmembrane segment spans residues 448 to 468; the sequence is TLLSPDLYEILTLTLFLLCFV. The Vacuolar portion of the chain corresponds to 469 to 481; the sequence is QVTSLDLTGLKNN. N-linked (GlcNAc...) asparagine glycosylation is present at Asn480. A helical transmembrane segment spans residues 482–502; sequence TMIQALLFSVIIVCGILFFLI. Over 503-522 the chain is Cytoplasmic; the sequence is ETSDTYMNSVISMSLQGDKR. The helical transmembrane segment at 523 to 543 threads the bilayer; sequence LIWTMIGISFCFAALMCIIPF. Over 544-562 the chain is Vacuolar; the sequence is GTTYFIIVLNLSTLQLAER. An N-linked (GlcNAc...) asparagine glycan is attached at Asn553. Residues 563 to 583 traverse the membrane as a helical segment; sequence LSPFFFSIVLGYFSVSYFWKS. Residues 584 to 587 are Cytoplasmic-facing; the sequence is KGQN. The helical transmembrane segment at 588 to 608 threads the bilayer; that stretch reads FLLKFVLSGATLLLYVALMGV. At 609–617 the chain is on the vacuolar side; that stretch reads SLNLPVWKQ. Residues 618–638 form a helical membrane-spanning segment; that stretch reads YICLSLPFLGSSMILTLLSNL. The Cytoplasmic portion of the chain corresponds to 639-653; it reads YHEYHEQRKSPISGS. Residues 654-674 traverse the membrane as a helical segment; sequence IVYCFGAVGGTVGISLGGYVF. Residues 675–734 are Vacuolar-facing; it reads HKTLIKLMHEKVMPFSKQGYLKKDLLKIIKHATESSDWVHESAPKFVFQTLIECYLQACR. Residues 735 to 755 form a helical membrane-spanning segment; that stretch reads NVFKLSTLFFTITVVAIFIFN. The Cytoplasmic segment spans residues 756–768; that stretch reads RIHCRSQNCLSLS.

It belongs to the major facilitator superfamily.

Its subcellular location is the vacuole membrane. In terms of biological role, transporter required for vacuolar uptake of basic amino acids. The chain is Vacuolar basic amino acid transporter 4 (VBA4) from Saccharomyces cerevisiae (strain ATCC 204508 / S288c) (Baker's yeast).